Consider the following 312-residue polypeptide: Porphobilinogen deaminase (312 aa).

Cys-241 is modified (S-(dipyrrolylmethanemethyl)cysteine).

Belongs to the HMBS family. In terms of assembly, monomer. Dipyrromethane serves as cofactor.

It carries out the reaction 4 porphobilinogen + H2O = hydroxymethylbilane + 4 NH4(+). It participates in porphyrin-containing compound metabolism; protoporphyrin-IX biosynthesis; coproporphyrinogen-III from 5-aminolevulinate: step 2/4. Tetrapolymerization of the monopyrrole PBG into the hydroxymethylbilane pre-uroporphyrinogen in several discrete steps. The polypeptide is Porphobilinogen deaminase (Pelotomaculum thermopropionicum (strain DSM 13744 / JCM 10971 / SI)).